We begin with the raw amino-acid sequence, 336 residues long: Oxaloacetate decarboxylase (336 aa).

One can recognise a Pyruvate carboxyltransferase domain in the interval 10–258 (PIVLDTTVRD…LAAVDLDRIF (249 aa)). 3 residues coordinate Mn(2+): Asp-19, His-197, and His-199.

The protein belongs to the 4-hydroxy-2-oxovalerate aldolase family. Homodimer. A divalent metal cation serves as cofactor.

The enzyme catalyses oxaloacetate + H(+) = pyruvate + CO2. Its activity is regulated as follows. Activity is abolished upon incubation with Chelex and EDTA. Exhibits oxaloacetate decarboxylase activity. Lacks any detectable aldolase activity with 4-hydroxy-2-oxopentanoate (HOPA), 4-hydroxy-2-oxohexanoate (HOHA) or other 4-hydroxy-2-oxoacids. The sequence is that of Oxaloacetate decarboxylase from Mycobacterium tuberculosis (strain ATCC 25618 / H37Rv).